Reading from the N-terminus, the 486-residue chain is MSTFYTVISWLAIFGYWLLIASVTLRILMKRRAVPSAMAWLLIIYILPLVGIIAYLSFGELHLGKRRAERARTMWPSTARWLADLRSCRSIFATHNSEVAAPLFQLCERRQGIAGVKGNQLQLLTSTDDTLNALIRDIELAHTSIEMMFYIWQPGGLADRVAEAMMAAARRGIRCRLMLDSAGSVAFFRSPYPAMMREAGIEVVEALQVNLLRVFLRRMDLRQHRKVVLIDNFIAYTGSMNLVDPRYFKQDAGVGQWIDVMARMEGPVATTMGIYYAFDWEMETGKRILPPEPICNILPFEKESGHTIQVIASGPGFPEELIHQSLLTAVYSARQQLVMTTPYFVPSDDLLHAICTAAQRGVDVSIIVPKKNDSMMVGWASRAFFTEMLAAGVKIYQFEGGLLHTKSVLVDGQLSLVGTVNLDMRSLWLNFEITLVIDDDGFGSDLACVQEDYIARSSLLDPLEWLKRPLWQRVVERLFYFFSPLL.

Helical transmembrane passes span 3–23 (TFYT…IASV) and 38–58 (MAWL…YLSF). 2 consecutive PLD phosphodiesterase domains span residues 219–246 (MDLR…VDPR) and 399–426 (EGGL…DMRS). Active-site residues include histidine 224, lysine 226, aspartate 231, histidine 404, lysine 406, and aspartate 411.

It belongs to the phospholipase D family. Cardiolipin synthase subfamily. ClsA sub-subfamily.

It localises to the cell inner membrane. The enzyme catalyses 2 a 1,2-diacyl-sn-glycero-3-phospho-(1'-sn-glycerol) = a cardiolipin + glycerol. Its function is as follows. Catalyzes the reversible phosphatidyl group transfer from one phosphatidylglycerol molecule to another to form cardiolipin (CL) (diphosphatidylglycerol) and glycerol. The chain is Cardiolipin synthase A from Edwardsiella ictaluri (strain 93-146).